The chain runs to 244 residues: Phosphonates import ATP-binding protein PhnC (244 aa).

An ABC transporter domain is found at Ile-6–Gln-244. An ATP-binding site is contributed by Gly-41–Ser-48.

The protein belongs to the ABC transporter superfamily. Phosphonates importer (TC 3.A.1.9.1) family. As to quaternary structure, the complex is composed of two ATP-binding proteins (PhnC), two transmembrane proteins (PhnE) and a solute-binding protein (PhnD).

Its subcellular location is the cell inner membrane. It catalyses the reaction phosphonate(out) + ATP + H2O = phosphonate(in) + ADP + phosphate + H(+). In terms of biological role, part of the ABC transporter complex PhnCDE involved in phosphonates import. Responsible for energy coupling to the transport system. The chain is Phosphonates import ATP-binding protein PhnC from Trichormus variabilis (strain ATCC 29413 / PCC 7937) (Anabaena variabilis).